The chain runs to 417 residues: MIQVLLVTICLAAFPYQGSSIMLESGKVNDYEVVYPQRLAPLPEGAVQQKYEDTMQYEFKVNGETIVLHLEKNKGLFSKDYSETHYSPDGRKITTYPSVEDHCYYHGRIENYEDSTASISACNGLKGHFKIQGETYFIESLKLSDSEAHAVFKYENVEKEDETHKICGVTQNWKSYDPIKKPSWLNLTPKQQTWPQTSVNLQLIVDHSMYAKYNSNSEKITKTLQERVNIMKEIFKPLNLDITLSGIEMWDKKDLITVKTAATDTLKLFAKWRQTDLLKRIDNDNAQLQTAVDFDGETVGLAFKSTMCDKRYSAGIIQDHSAIPLLMAVTMAHELGHNLGMDHDDTSKCNCNVCIMAPRLNTNPSKTFSDCSNNDYQKFLTDKKPKCIHKKSLKTDTVSTSVSGNEPLDDNVDGFHA.

Positions 1-20 (MIQVLLVTICLAAFPYQGSS) are cleaved as a signal peptide. A propeptide spanning residues 21 to 189 (IMLESGKVND…KKPSWLNLTP (169 aa)) is cleaved from the precursor. One can recognise a Peptidase M12B domain in the interval 197–392 (TSVNLQLIVD…KKPKCIHKKS (196 aa)). 3 cysteine pairs are disulfide-bonded: Cys308–Cys387, Cys349–Cys371, and Cys351–Cys354. His333 serves as a coordination point for Zn(2+). The active site involves Glu334. Positions 337 and 343 each coordinate Zn(2+). A propeptide spanning residues 393 to 417 (LKTDTVSTSVSGNEPLDDNVDGFHA) is cleaved from the precursor. The tract at residues 398–417 (VSTSVSGNEPLDDNVDGFHA) is disordered. Acidic residues predominate over residues 407-417 (PLDDNVDGFHA).

It belongs to the venom metalloproteinase (M12B) family. P-I subfamily. In terms of assembly, monomer. It depends on Zn(2+) as a cofactor. In terms of tissue distribution, expressed by the venom gland.

It localises to the secreted. In terms of biological role, this protein is an alkaline zinc metalloprotease from snake venom that possesses weak hemorrhagic activity. In Deinagkistrodon acutus (Hundred-pace snake), this protein is Snake venom metalloproteinase aculysin-1.